The following is a 211-amino-acid chain: Large ribosomal subunit protein uL4 (211 aa).

The segment at 48–89 is disordered; that stretch reads KRAGTASTKTRVEVRGGGAKPWRQKGTGRARAGSRTSPLWRG.

It belongs to the universal ribosomal protein uL4 family. As to quaternary structure, part of the 50S ribosomal subunit.

One of the primary rRNA binding proteins, this protein initially binds near the 5'-end of the 23S rRNA. It is important during the early stages of 50S assembly. It makes multiple contacts with different domains of the 23S rRNA in the assembled 50S subunit and ribosome. Its function is as follows. Forms part of the polypeptide exit tunnel. The polypeptide is Large ribosomal subunit protein uL4 (Desulfotalea psychrophila (strain LSv54 / DSM 12343)).